The primary structure comprises 476 residues: Proline--tRNA ligase 2 (476 aa).

The protein belongs to the class-II aminoacyl-tRNA synthetase family. ProS type 3 subfamily. As to quaternary structure, homodimer.

It localises to the cytoplasm. It carries out the reaction tRNA(Pro) + L-proline + ATP = L-prolyl-tRNA(Pro) + AMP + diphosphate. Functionally, catalyzes the attachment of proline to tRNA(Pro) in a two-step reaction: proline is first activated by ATP to form Pro-AMP and then transferred to the acceptor end of tRNA(Pro). This Bacillus thuringiensis subsp. konkukian (strain 97-27) protein is Proline--tRNA ligase 2.